Consider the following 371-residue polypeptide: Opine oxidase subunit B (371 aa).

As to quaternary structure, heterodimer of a subunit A and a subunit B.

Its pathway is opine metabolism; octopine degradation. Functionally, oxidative cleavage of octopine into L-arginine and pyruvate. This is Opine oxidase subunit B (ooxB) from Rhizobium meliloti (Ensifer meliloti).